Consider the following 465-residue polypeptide: Hepatocyte nuclear factor 6 (465 aa).

Disordered regions lie at residues 15–84 (GVSH…GPLH) and 119–141 (SDKF…HQRL). Basic residues predominate over residues 123-140 (PHHHHHHHHHHHPHHHQR). The CUT DNA-binding region spans 283 to 369 (GSNSGQMEEI…QRMSALRLAA (87 aa)). Positions 385 to 444 (PKKPRLVFTDVQRRTLHAIFKENKRPSKELQITISQQLGLELSTVSNFFMNARRRSLDKW) form a DNA-binding region, homeobox. Residues 443–465 (KWQDEGGSNSGSSSSSSSTCTKA) form a disordered region. Residues 448–465 (GGSNSGSSSSSSSTCTKA) show a composition bias toward low complexity.

The protein belongs to the CUT homeobox family. As to quaternary structure, binds DNA as a monomer.

It is found in the nucleus. In terms of biological role, transcriptional activator. Binds the consensus sequence 5'-DHWATTGAYTWWD-3' on a variety of gene promoters such as those of HNF3B and TTR. Important for liver genes transcription. Stimulates the expression of Onecut3 in the developing endoderm. In Mus musculus (Mouse), this protein is Hepatocyte nuclear factor 6 (Onecut1).